A 274-amino-acid polypeptide reads, in one-letter code: Large ribosomal subunit protein uL2cz/uL2cy (274 aa).

Disordered regions lie at residues 1–22 (MAIH…DSQV) and 225–252 (PVDH…GYPA).

Belongs to the universal ribosomal protein uL2 family. In terms of assembly, part of the 50S ribosomal subunit.

Its subcellular location is the plastid. It is found in the chloroplast. In Barbarea verna (Land cress), this protein is Large ribosomal subunit protein uL2cz/uL2cy (rpl2-A).